A 380-amino-acid chain; its full sequence is Cytochrome b (380 aa).

4 helical membrane passes run 34 to 54 (YGSLLGLCLMTQILTGLFLAM), 78 to 99 (WLMRNIHANGASFFFICIYLHI), 114 to 134 (WNIGVILLLLVMATAFVGYVL), and 179 to 199 (FFTFHFLLPFLIAGTSMLHLL). Heme b contacts are provided by His84 and His98. Heme b contacts are provided by His183 and His197. An a ubiquinone-binding site is contributed by His202. 4 helical membrane-spanning segments follow: residues 227–247 (YKDTFGFMIMLAALALLSTTN), 289–309 (LGGVLALLFSIMILMLIPSLH), 321–341 (LSQLMFWSIIANTLVLTWIGG), and 348–368 (FILIGQISSALYFILFLVLLP).

It belongs to the cytochrome b family. As to quaternary structure, the cytochrome bc1 complex contains 3 respiratory subunits (MT-CYB, CYC1 and UQCRFS1), 2 core proteins (UQCRC1 and UQCRC2) and probably 6 low-molecular weight proteins. Heme b is required as a cofactor.

Its subcellular location is the mitochondrion inner membrane. Functionally, component of the ubiquinol-cytochrome c reductase complex (complex III or cytochrome b-c1 complex) that is part of the mitochondrial respiratory chain. The b-c1 complex mediates electron transfer from ubiquinol to cytochrome c. Contributes to the generation of a proton gradient across the mitochondrial membrane that is then used for ATP synthesis. This is Cytochrome b (mt-cyb) from Typhlonectes natans (Rubber eel).